Reading from the N-terminus, the 100-residue chain is NADH-quinone oxidoreductase subunit K (100 aa).

A run of 3 helical transmembrane segments spans residues 4–24 (LTHGLILAAILFVLGLTGLVI), 28–48 (LLFMLIGLEIMINASALAFVV), and 60–80 (VMYILAISLAAAEASIGLALL).

Belongs to the complex I subunit 4L family. As to quaternary structure, NDH-1 is composed of 13 different subunits. Subunits NuoA, H, J, K, L, M, N constitute the membrane sector of the complex.

It is found in the cell inner membrane. The catalysed reaction is a quinone + NADH + 5 H(+)(in) = a quinol + NAD(+) + 4 H(+)(out). Functionally, NDH-1 shuttles electrons from NADH, via FMN and iron-sulfur (Fe-S) centers, to quinones in the respiratory chain. The immediate electron acceptor for the enzyme in this species is believed to be ubiquinone. Couples the redox reaction to proton translocation (for every two electrons transferred, four hydrogen ions are translocated across the cytoplasmic membrane), and thus conserves the redox energy in a proton gradient. The chain is NADH-quinone oxidoreductase subunit K from Salmonella agona (strain SL483).